A 291-amino-acid polypeptide reads, in one-letter code: ATP synthase gamma chain (291 aa).

It belongs to the ATPase gamma chain family. In terms of assembly, F-type ATPases have 2 components, CF(1) - the catalytic core - and CF(0) - the membrane proton channel. CF(1) has five subunits: alpha(3), beta(3), gamma(1), delta(1), epsilon(1). CF(0) has three main subunits: a, b and c.

It is found in the cell inner membrane. In terms of biological role, produces ATP from ADP in the presence of a proton gradient across the membrane. The gamma chain is believed to be important in regulating ATPase activity and the flow of protons through the CF(0) complex. This Rhodopseudomonas palustris (strain BisB5) protein is ATP synthase gamma chain.